The primary structure comprises 91 residues: MKVKAVAKQVPVTPRKXRLVVDLIRGKKIKEAESILMFTPRSASPILAKLLKSAVANSVHNFNFNIDDLYVEEIFVNEGIRLPRLFPRAKG.

The protein belongs to the universal ribosomal protein uL22 family. Part of the 50S ribosomal subunit.

Its function is as follows. This protein binds specifically to 23S rRNA; its binding is stimulated by other ribosomal proteins, e.g. L4, L17, and L20. It is important during the early stages of 50S assembly. It makes multiple contacts with different domains of the 23S rRNA in the assembled 50S subunit and ribosome. The globular domain of the protein is located near the polypeptide exit tunnel on the outside of the subunit, while an extended beta-hairpin is found that lines the wall of the exit tunnel in the center of the 70S ribosome. The sequence is that of Large ribosomal subunit protein uL22 (rplV) from Ash yellows phytoplasma.